The chain runs to 278 residues: Large ribosomal subunit protein uL2 (278 aa).

Disordered regions lie at residues 29–53 (PVKSLTEGKRKTGGRNNKGHVTSRG) and 221–278 (RGVA…KKKR). Positions 269 to 278 (IRSRHAKKKR) are enriched in basic residues.

It belongs to the universal ribosomal protein uL2 family. Part of the 50S ribosomal subunit. Forms a bridge to the 30S subunit in the 70S ribosome.

One of the primary rRNA binding proteins. Required for association of the 30S and 50S subunits to form the 70S ribosome, for tRNA binding and peptide bond formation. It has been suggested to have peptidyltransferase activity; this is somewhat controversial. Makes several contacts with the 16S rRNA in the 70S ribosome. This chain is Large ribosomal subunit protein uL2, found in Erythrobacter litoralis (strain HTCC2594).